The primary structure comprises 316 residues: C1GALT1-specific chaperone 1 (316 aa).

The Cytoplasmic portion of the chain corresponds to 1–6; sequence MLSESS. The chain crosses the membrane as a helical; Signal-anchor for type II membrane protein span at residues 7–26; the sequence is SFLKGVMLGSIFCALITMLG. Topologically, residues 27–316 are lumenal; the sequence is HIRIGNRMHH…FLPPNGSEND (290 aa).

It belongs to the glycosyltransferase 31 family. Beta3-Gal-T subfamily. As to quaternary structure, associates with core 1 beta-3-galactosyltransferase (C1GALT1), probably not with the soluble active form.

It is found in the membrane. Functionally, probable chaperone required for the generation of 1 O-glycan Gal-beta1-3GalNAc-alpha1-Ser/Thr (T antigen), which is a precursor for many extended O-glycans in glycoproteins. Probably acts as a specific molecular chaperone assisting the folding/stability of core 1 beta-3-galactosyltransferase (C1GALT1). This chain is C1GALT1-specific chaperone 1 (C1galt1c1), found in Mus musculus (Mouse).